Consider the following 384-residue polypeptide: MAKHLFTSESVSEGHPDKIADQISDAVLDAILEQDPKARVACETYVKTGMVLVGGEITTSAWVDIEEITRKTVREIGYVHSDMGFDANSCAVLSAIGKQSPDINQGVDRTDPLEQGAGDQGLMFGYATNETEVLMPAPVTYAHRLVQRQAEVRKNGTLPWLRPDAKSQVTFQYDDGKIVGIDAVVLSTQHSEDISLKDLQEAVMEEIIKPVLPTEWLSAGTKYHINPTGRFVIGGPMGDCGLTGRKIIVDTYGGMARHGGGAFSGKDPSKVDRSAAYAARYVAKNIVAAGLADRCEIQVSYAIGVAEPTSIMVETFGTEKIPTEQLTLLVREFFDLRPYGLIQMMDLLQPIYRETAAYGHFGREHFPWEATDKAALLRDAAGLK.

ATP is bound at residue histidine 15. Position 17 (aspartate 17) interacts with Mg(2+). Glutamate 43 contributes to the K(+) binding site. L-methionine-binding residues include glutamate 56 and glutamine 99. The segment at 99–109 (QSPDINQGVDR) is flexible loop. ATP contacts are provided by residues 164 to 166 (DAK), 230 to 231 (RF), aspartate 239, 245 to 246 (RK), alanine 262, and lysine 266. Aspartate 239 is a binding site for L-methionine. L-methionine is bound at residue lysine 270.

This sequence belongs to the AdoMet synthase family. As to quaternary structure, homotetramer; dimer of dimers. It depends on Mg(2+) as a cofactor. K(+) is required as a cofactor.

It is found in the cytoplasm. The enzyme catalyses L-methionine + ATP + H2O = S-adenosyl-L-methionine + phosphate + diphosphate. Its pathway is amino-acid biosynthesis; S-adenosyl-L-methionine biosynthesis; S-adenosyl-L-methionine from L-methionine: step 1/1. Functionally, catalyzes the formation of S-adenosylmethionine (AdoMet) from methionine and ATP. The overall synthetic reaction is composed of two sequential steps, AdoMet formation and the subsequent tripolyphosphate hydrolysis which occurs prior to release of AdoMet from the enzyme. This chain is S-adenosylmethionine synthase, found in Serratia proteamaculans (strain 568).